A 369-amino-acid chain; its full sequence is Endophilin-A (369 aa).

The BAR domain occupies 18-248; the sequence is TEKMGGAEGT…LQEKRAEAES (231 aa). Residues 227-249 are a coiled coil; sequence QCADVLRGLQETLQEKRAEAESR. Residues 275–294 show a composition bias toward low complexity; sequence GTPSHISSSASPLPSPMRSP. The tract at residues 275–297 is disordered; it reads GTPSHISSSASPLPSPMRSPAKS. Residues 305–364 enclose the SH3 domain; sequence QQQPCCQALYDFDPENPGELGFKENDIITLLNRVDDNWYEGAVNGRTGYFPQSYVQVQVP.

Belongs to the endophilin family.

The protein resides in the cytoplasm. It is found in the membrane. Functionally, required presynaptically at the neuromuscular junction. Implicated in synaptic vesicle endocytosis. This Drosophila virilis (Fruit fly) protein is Endophilin-A.